A 225-amino-acid chain; its full sequence is uncharacterized protein (225 aa).

The signal sequence occupies residues 1 to 22; sequence MLQHYSVSWKKGLAALCLLAVA. A 4Fe-4S ferredoxin-type domain is found at 161–190; it reads GNLTAAEEKKTGCLVCLDSCPVGIVSNATY.

This is an uncharacterized protein from Escherichia coli (strain K12).